The following is a 233-amino-acid chain: Large ribosomal subunit protein uL1 (233 aa).

This sequence belongs to the universal ribosomal protein uL1 family. In terms of assembly, part of the 50S ribosomal subunit.

In terms of biological role, binds directly to 23S rRNA. The L1 stalk is quite mobile in the ribosome, and is involved in E site tRNA release. Protein L1 is also a translational repressor protein, it controls the translation of the L11 operon by binding to its mRNA. This is Large ribosomal subunit protein uL1 from Shewanella sp. (strain ANA-3).